A 142-amino-acid chain; its full sequence is Large ribosomal subunit protein uL11 (142 aa).

The protein belongs to the universal ribosomal protein uL11 family. In terms of assembly, part of the ribosomal stalk of the 50S ribosomal subunit. Interacts with L10 and the large rRNA to form the base of the stalk. L10 forms an elongated spine to which L12 dimers bind in a sequential fashion forming a multimeric L10(L12)X complex. Post-translationally, one or more lysine residues are methylated.

Forms part of the ribosomal stalk which helps the ribosome interact with GTP-bound translation factors. The protein is Large ribosomal subunit protein uL11 of Bradyrhizobium diazoefficiens (strain JCM 10833 / BCRC 13528 / IAM 13628 / NBRC 14792 / USDA 110).